We begin with the raw amino-acid sequence, 206 residues long: MQLELLNEQGQAASKVDVPETVFDRQYNEDLIHQIVVAYQANARQGTRAQKDREQVKHSTKKPFKQKGTGNARAGMTSSPLWRGGGRIFPNLPEENFSQKINKKMYRAGMASILSQLAREGRLAVVDSLKLDTPKTKVLADKFKAMNLQSVMVIADEVDENLYLASRNLKNVFVTEPRYADPVSLVHYKKVLVTKGAIDKLKEMFA.

The tract at residues 46–77 (GTRAQKDREQVKHSTKKPFKQKGTGNARAGMT) is disordered.

The protein belongs to the universal ribosomal protein uL4 family. In terms of assembly, part of the 50S ribosomal subunit.

One of the primary rRNA binding proteins, this protein initially binds near the 5'-end of the 23S rRNA. It is important during the early stages of 50S assembly. It makes multiple contacts with different domains of the 23S rRNA in the assembled 50S subunit and ribosome. In terms of biological role, forms part of the polypeptide exit tunnel. The chain is Large ribosomal subunit protein uL4 from Acidovorax ebreus (strain TPSY) (Diaphorobacter sp. (strain TPSY)).